The chain runs to 350 residues: Glycerol-1-phosphate dehydrogenase [NAD(P)+] (350 aa).

Residues 97–101 and 119–122 contribute to the NAD(+) site; these read GSIID and TTAS. Residue Asp124 coordinates substrate. Position 128 (Ser128) interacts with NAD(+). Asp171 is a binding site for substrate. Zn(2+) is bound by residues Asp171 and His251. Residue His255 participates in substrate binding. Position 267 (His267) interacts with Zn(2+).

It belongs to the glycerol-1-phosphate dehydrogenase family. It depends on Zn(2+) as a cofactor.

Its subcellular location is the cytoplasm. The catalysed reaction is sn-glycerol 1-phosphate + NAD(+) = dihydroxyacetone phosphate + NADH + H(+). The enzyme catalyses sn-glycerol 1-phosphate + NADP(+) = dihydroxyacetone phosphate + NADPH + H(+). It functions in the pathway membrane lipid metabolism; glycerophospholipid metabolism. Catalyzes the NAD(P)H-dependent reduction of dihydroxyacetonephosphate (DHAP or glycerone phosphate) to glycerol 1-phosphate (G1P). The G1P thus generated is used as the glycerophosphate backbone of phospholipids in the cellular membranes of Archaea. The sequence is that of Glycerol-1-phosphate dehydrogenase [NAD(P)+] from Thermococcus sibiricus (strain DSM 12597 / MM 739).